The chain runs to 235 residues: MTFRATVLTLYPEMFPGPLDISLAGRARSAGTWSLETVQIRDFATDKHRSVDDTPAGGGAGMVMRADVLARAIDHASPEEDARPRLLMSPRGKPLTQSFVRELATGPGAVIVCGRFEGVDQRVIEARCLLEVSVGDYILSGGEPAAIVLLDAVVRLLPGVMGNESSGAEESFESGLLEHPQYTRPQTFEGREIPEVLTSGNHRKIAEWRSAEAEQLTRERRPDLWLGYHRAKGGT.

Residues Gly-114 and 134-139 (VGDYIL) each bind S-adenosyl-L-methionine.

It belongs to the RNA methyltransferase TrmD family. In terms of assembly, homodimer.

It localises to the cytoplasm. The catalysed reaction is guanosine(37) in tRNA + S-adenosyl-L-methionine = N(1)-methylguanosine(37) in tRNA + S-adenosyl-L-homocysteine + H(+). In terms of biological role, specifically methylates guanosine-37 in various tRNAs. The polypeptide is tRNA (guanine-N(1)-)-methyltransferase (Chelativorans sp. (strain BNC1)).